A 927-amino-acid polypeptide reads, in one-letter code: BTB/POZ domain-containing protein KCTD19 (927 aa).

The BTB 1 domain occupies 18–72 (NVGGWHFSVPRSKLAQFPDSLLWKEASALTSSENQRLFIDRDGSTFRHVHYYLYT). Phosphoserine is present on Ser270. One can recognise a BTB 2 domain in the interval 399-486 (IKLYVGSHWY…YHIPALSEAL (88 aa)). The disordered stretch occupies residues 664–760 (VEEASLHVPS…NANGTDNPGA (97 aa)). The span at 731–743 (DWGKQRPKDRESP) shows a compositional bias: basic and acidic residues.

As to quaternary structure, identified in a complex with ZNF541, HDAC1 and HSPA2. Identified in a complex with ZNF541 and HDAC1. Identified in a complex with HDAC1, HDAC2, DNTTIP1 and ZNF541. As to expression, detected in adult testis.

It is found in the nucleus. Functionally, transcription regulator which is essential for male fertility and for the completion of meiotic prophase in spermatocytes. Regulates progression of the pachytene stage of meiotic prophase and promotes the transcriptional activation activity ZNF541. Required for the organization of chromosomes during metaphase I. The protein is BTB/POZ domain-containing protein KCTD19 (Kctd19) of Mus musculus (Mouse).